A 725-amino-acid chain; its full sequence is Polyribonucleotide nucleotidyltransferase (725 aa).

2 residues coordinate Mg(2+): Asp-488 and Asp-494. In terms of domain architecture, KH spans Pro-555–Ile-614. An S1 motif domain is found at Gly-624–Lys-692. The interval Ile-702 to Gln-725 is disordered. The span at Ala-706–Gln-725 shows a compositional bias: low complexity.

This sequence belongs to the polyribonucleotide nucleotidyltransferase family. Mg(2+) serves as cofactor.

It localises to the cytoplasm. The enzyme catalyses RNA(n+1) + phosphate = RNA(n) + a ribonucleoside 5'-diphosphate. Involved in mRNA degradation. Catalyzes the phosphorolysis of single-stranded polyribonucleotides processively in the 3'- to 5'-direction. In Cupriavidus metallidurans (strain ATCC 43123 / DSM 2839 / NBRC 102507 / CH34) (Ralstonia metallidurans), this protein is Polyribonucleotide nucleotidyltransferase.